Reading from the N-terminus, the 230-residue chain is Uracil-DNA glycosylase (230 aa).

Catalysis depends on aspartate 70, which acts as the Proton acceptor.

It belongs to the uracil-DNA glycosylase (UDG) superfamily. UNG family.

The protein localises to the cytoplasm. The enzyme catalyses Hydrolyzes single-stranded DNA or mismatched double-stranded DNA and polynucleotides, releasing free uracil.. Excises uracil residues from the DNA which can arise as a result of misincorporation of dUMP residues by DNA polymerase or due to deamination of cytosine. The sequence is that of Uracil-DNA glycosylase from Pseudomonas fluorescens (strain SBW25).